The primary structure comprises 189 residues: Peptidyl-tRNA hydrolase (189 aa).

TRNA is bound at residue Tyr-15. His-20 acts as the Proton acceptor in catalysis. Residues Phe-66, Asn-68, and Asn-114 each contribute to the tRNA site.

It belongs to the PTH family. In terms of assembly, monomer.

It is found in the cytoplasm. It catalyses the reaction an N-acyl-L-alpha-aminoacyl-tRNA + H2O = an N-acyl-L-amino acid + a tRNA + H(+). Functionally, hydrolyzes ribosome-free peptidyl-tRNAs (with 1 or more amino acids incorporated), which drop off the ribosome during protein synthesis, or as a result of ribosome stalling. Catalyzes the release of premature peptidyl moieties from peptidyl-tRNA molecules trapped in stalled 50S ribosomal subunits, and thus maintains levels of free tRNAs and 50S ribosomes. This Streptococcus equi subsp. zooepidemicus (strain H70) protein is Peptidyl-tRNA hydrolase.